A 382-amino-acid chain; its full sequence is MHGRRHLAASLARALTYAPSRSISSTPSLLQTLDPSTPSPAAAPPTAGRLAELRQRLQADAPSLGDFTYSVEVGTRKKPLPKPKWMKETIPGGAKYAGIKAKLRELKLHTVCEEARCPNLGECWSGGETGTATATIMILGDTCTRGCRFCNVKTSRTPPPPDPDEPSNVAQAIASWGLEYIVITSVDRDDLPDQGSGHFAETVQKLKVLKPEMLIEALVPDFRGDPACVEKVATSGLHVFAHNIETVEELQRNVRDHRANFKQSIDVLKLAKEYAPAGTLTKTSIMLGCGETPDQVISTMEKVRAAGVDVMTFGQYMRPSKRHMPVSEYVTPEAFERYRSLGVDMGFRYVASGPMVRSSYKAGEFYIKAMIEADRAKATTAI.

The transit peptide at 1 to 30 directs the protein to the mitochondrion; that stretch reads MHGRRHLAASLARALTYAPSRSISSTPSLL. Positions 25–34 are enriched in polar residues; the sequence is STPSLLQTLD. Residues 25–47 are disordered; that stretch reads STPSLLQTLDPSTPSPAAAPPTA. 7 residues coordinate [4Fe-4S] cluster: Cys112, Cys117, Cys123, Cys143, Cys147, Cys150, and Ser359. The Radical SAM core domain maps to 128–348; it reads ETGTATATIM…RSLGVDMGFR (221 aa).

This sequence belongs to the radical SAM superfamily. Lipoyl synthase family. [4Fe-4S] cluster serves as cofactor.

It is found in the mitochondrion. It catalyses the reaction [[Fe-S] cluster scaffold protein carrying a second [4Fe-4S](2+) cluster] + N(6)-octanoyl-L-lysyl-[protein] + 2 oxidized [2Fe-2S]-[ferredoxin] + 2 S-adenosyl-L-methionine + 4 H(+) = [[Fe-S] cluster scaffold protein] + N(6)-[(R)-dihydrolipoyl]-L-lysyl-[protein] + 4 Fe(3+) + 2 hydrogen sulfide + 2 5'-deoxyadenosine + 2 L-methionine + 2 reduced [2Fe-2S]-[ferredoxin]. It functions in the pathway protein modification; protein lipoylation via endogenous pathway; protein N(6)-(lipoyl)lysine from octanoyl-[acyl-carrier-protein]: step 2/2. Functionally, catalyzes the radical-mediated insertion of two sulfur atoms into the C-6 and C-8 positions of the octanoyl moiety bound to the lipoyl domains of lipoate-dependent enzymes, thereby converting the octanoylated domains into lipoylated derivatives. This is Lipoyl synthase, mitochondrial from Oryza sativa subsp. indica (Rice).